A 234-amino-acid polypeptide reads, in one-letter code: Transcription factor bHLH160 (234 aa).

Residues 1 to 13 (MSSQPNHQTSISS) are compositionally biased toward polar residues. The interval 1–67 (MSSQPNHQTS…GAAKKQDHNA (67 aa)) is disordered. Residues 27–37 (IVEKESAEKDT) show a composition bias toward basic and acidic residues. The bHLH domain maps to 60 to 115 (AKKQDHNAKERLRRMRLHASYLTLGTLLPDHSSSSSKKKWSAPSIIDNVITYIPKL).

The protein belongs to the bHLH protein family.

The protein localises to the nucleus. This Arabidopsis thaliana (Mouse-ear cress) protein is Transcription factor bHLH160.